A 609-amino-acid chain; its full sequence is MFDAKNFLANVTHQPGVYRMFDEKGQVIYVGKAKDLKKRLSSYFRTNLNSKKTSALVSHIHSIETTITASETEALLLEHNYIKAFQPRYNVLLRDDKSYPYILLTKERHPRITSHRGSKKVQGEYFGPYPHAGAVRETLSLLQKLFPIRQCENSVYNNRSRPCLQYQIGRCSGPCIDGLVSDEEYQQQVDFARLFLQGKDQQVLEHLIKKMEQASMQLNFEQAAYFRDQIQAIRAVIEKQFVSNERLDDMDILAIAYQLGIACVQVLFIRQGKVLGNRSYFPKVPANTDLSELTETFVGQFYLQGHQGRIIPSTIIVDHVLNEKHELEVLLTEQAGRKVNIQDNVKGNKSKFLHLAQMNAQAALVTQLKQANLIQERYQALQELLSLTTIKRMECFDISHTMGEQTIASCVVFDTEGPLKSDYRRFNISGITAGDDYAAMEQALLKRYDRPLENEKIPDIIFIDGGKGQLNRALQVFAQLNVSWDKNKPILIGVAKGVDRKAGLETLIISKQNKEVNLLPDSLALHLIQHIRDESHYHAIGGHRKKRQQAFTQSGLEAIEGVGAKRRQALLKYLGGMQGVKNATLAEISSVPGISAALAERIYETLRSE.

The region spanning 13 to 91 is the GIY-YIG domain; the sequence is HQPGVYRMFD…IKAFQPRYNV (79 aa). The 36-residue stretch at 201 to 236 folds into the UVR domain; it reads QQVLEHLIKKMEQASMQLNFEQAAYFRDQIQAIRAV.

It belongs to the UvrC family. Interacts with UvrB in an incision complex.

Its subcellular location is the cytoplasm. In terms of biological role, the UvrABC repair system catalyzes the recognition and processing of DNA lesions. UvrC both incises the 5' and 3' sides of the lesion. The N-terminal half is responsible for the 3' incision and the C-terminal half is responsible for the 5' incision. This is UvrABC system protein C from Histophilus somni (strain 129Pt) (Haemophilus somnus).